We begin with the raw amino-acid sequence, 380 residues long: Probable pectin lyase A (380 aa).

An N-terminal signal peptide occupies residues 1-20 (MRYTSLFTAVTAALASTAAA). Disulfide bonds link cysteine 83–cysteine 102 and cysteine 92–cysteine 226. Residue asparagine 129 is glycosylated (N-linked (GlcNAc...) asparagine). Arginine 256 is an active-site residue. Cysteine 323 and cysteine 331 are joined by a disulfide.

The protein belongs to the polysaccharide lyase 1 family.

It is found in the secreted. The enzyme catalyses Eliminative cleavage of (1-&gt;4)-alpha-D-galacturonan methyl ester to give oligosaccharides with 4-deoxy-6-O-methyl-alpha-D-galact-4-enuronosyl groups at their non-reducing ends.. Pectinolytic enzymes consist of four classes of enzymes: pectin lyase, polygalacturonase, pectin methylesterase and rhamnogalacturonase. Among pectinolytic enzymes, pectin lyase is the most important in depolymerization of pectin, since it cleaves internal glycosidic bonds of highly methylated pectins. The sequence is that of Probable pectin lyase A (pelA) from Aspergillus fumigatus (strain ATCC MYA-4609 / CBS 101355 / FGSC A1100 / Af293) (Neosartorya fumigata).